The chain runs to 86 residues: Cell division topological specificity factor (86 aa).

The protein belongs to the MinE family.

Prevents the cell division inhibition by proteins MinC and MinD at internal division sites while permitting inhibition at polar sites. This ensures cell division at the proper site by restricting the formation of a division septum at the midpoint of the long axis of the cell. The sequence is that of Cell division topological specificity factor from Shewanella sediminis (strain HAW-EB3).